The primary structure comprises 285 residues: VQ motif-containing protein 20 (285 aa).

The span at 1 to 10 shows a compositional bias: basic and acidic residues; sequence MSSTYKDNHP. Residues 1 to 68 are disordered; it reads MSSTYKDNHP…PSPSSFSSAA (68 aa). The span at 11–23 shows a compositional bias: basic residues; that stretch reads YHHHPHHHHHHPK. The VQ motif lies at 91 to 100; it reads FMALVQKLTG. Residues 195–218 are disordered; it reads YSAVAIPPQPPPHPPPPPPPPSMY. A compositionally biased stretch (pro residues) spans 201 to 216; the sequence is PPQPPPHPPPPPPPPS.

Its subcellular location is the nucleus. In terms of biological role, may function as negative regulator of plant defense. The polypeptide is VQ motif-containing protein 20 (Arabidopsis thaliana (Mouse-ear cress)).